We begin with the raw amino-acid sequence, 176 residues long: ATP-dependent protease subunit HslV (176 aa).

Thr2 is a catalytic residue. Na(+) contacts are provided by Gly157, Cys160, and Thr163.

The protein belongs to the peptidase T1B family. HslV subfamily. In terms of assembly, a double ring-shaped homohexamer of HslV is capped on each side by a ring-shaped HslU homohexamer. The assembly of the HslU/HslV complex is dependent on binding of ATP.

It is found in the cytoplasm. It catalyses the reaction ATP-dependent cleavage of peptide bonds with broad specificity.. With respect to regulation, allosterically activated by HslU binding. In terms of biological role, protease subunit of a proteasome-like degradation complex believed to be a general protein degrading machinery. This chain is ATP-dependent protease subunit HslV, found in Pseudomonas fluorescens (strain SBW25).